The primary structure comprises 487 residues: Chromosomal replication initiator protein DnaA (487 aa).

Residues 1-71 (MMHDALFERF…TSLVQSEDPD (71 aa)) form a domain I, interacts with DnaA modulators region. Residues 71–141 (DVLKVEILVR…QGGSGPLFGS (71 aa)) are domain II. A domain III, AAA+ region region spans residues 142–364 (PLDTRFTFDT…GAFNQLMFRR (223 aa)). 4 residues coordinate ATP: G188, G190, K191, and T192. Residues 365-487 (SFEPNLSVDR…LKRLINENNA (123 aa)) are domain IV, binds dsDNA.

It belongs to the DnaA family. In terms of assembly, oligomerizes as a right-handed, spiral filament on DNA at oriC.

The protein resides in the cytoplasm. Functionally, plays an essential role in the initiation and regulation of chromosomal replication. ATP-DnaA binds to the origin of replication (oriC) to initiate formation of the DNA replication initiation complex once per cell cycle. Binds the DnaA box (a 9 base pair repeat at the origin) and separates the double-stranded (ds)DNA. Forms a right-handed helical filament on oriC DNA; dsDNA binds to the exterior of the filament while single-stranded (ss)DNA is stabiized in the filament's interior. The ATP-DnaA-oriC complex binds and stabilizes one strand of the AT-rich DNA unwinding element (DUE), permitting loading of DNA polymerase. After initiation quickly degrades to an ADP-DnaA complex that is not apt for DNA replication. Binds acidic phospholipids. This Agrobacterium fabrum (strain C58 / ATCC 33970) (Agrobacterium tumefaciens (strain C58)) protein is Chromosomal replication initiator protein DnaA.